The sequence spans 266 residues: MRFNNKMLALAALLFAAQASADTLESIDNCAVGCPTGGSSNVSIVRHAYTLNNNSTTKFANWVAYHITKDTPASGKTRNWKTDPALNPADTLAPADYTGANAALKVDRGHQAPLASLAGVSDWESLNYLSNITPQKSDLNQGAWARLEDQERKLIDRADISSVYTVTGPLYERDMGKLPGTQKAHTIPSAYWKVIFINNSPAVNHYAAFLFDQNTPKGADFCQFRVTVDEIEKRTGLIIWAGLPDDVQASLKSKPGVLPELMGCKN.

A signal peptide spans 1–21 (MRFNNKMLALAALLFAAQASA). A disulfide bridge links Cys-30 with Cys-34. His-110 (proton acceptor) is an active-site residue. Asn-140 is a Mg(2+) binding site. Cys-222 and Cys-264 are oxidised to a cystine.

It belongs to the DNA/RNA non-specific endonuclease family. As to quaternary structure, homodimer. It depends on Mg(2+) as a cofactor.

The protein resides in the secreted. It carries out the reaction Endonucleolytic cleavage to 5'-phosphomononucleotide and 5'-phosphooligonucleotide end-products.. Catalyzes the hydrolysis of both DNA and RNA, double- or single-stranded, at the 3'position of the phosphodiester bond to produce 5'-phosphorylated mono-, di-, tri- and tetranucleotides. DNA is a slightly better substrate than RNA. The polypeptide is Nuclease (nucA) (Serratia marcescens).